Here is a 201-residue protein sequence, read N- to C-terminus: Small ribosomal subunit protein uS4c (201 aa).

Positions 89–151 constitute an S4 RNA-binding domain; the sequence is MRLDNILFRL…QKSKTLIQNY (63 aa).

It belongs to the universal ribosomal protein uS4 family. As to quaternary structure, part of the 30S ribosomal subunit. Contacts protein S5. The interaction surface between S4 and S5 is involved in control of translational fidelity.

It localises to the plastid. It is found in the chloroplast. Functionally, one of the primary rRNA binding proteins, it binds directly to 16S rRNA where it nucleates assembly of the body of the 30S subunit. Its function is as follows. With S5 and S12 plays an important role in translational accuracy. This Phaseolus vulgaris (Kidney bean) protein is Small ribosomal subunit protein uS4c (rps4).